We begin with the raw amino-acid sequence, 409 residues long: MVPDDVEPMEVDDDGALIVDLNETVEEDEETKKEKKRRKRFREKLKRFDHYSQFSGISIAQIDWPLIQGRSLQRSPLTGQSFNADENIFRIDEWPRETFLQITSTLTFCAGAALLSNEKITLFVFQRTMKTLVAYCNFMYHRAITHNRRQINRIDVHELISRNPLRFHMFLQKFLPHPDINRTHFNNEFLYYFHNLYFQDETCRLLYHDVARYSPIINQQGTRMSLQHQIYYPDVMRNPAFDALWFTSFINPSGYSFSRFHAYRFHEALGMPPLESELIIVLDWLAKLIICDIGYKVLAWRDARGFQGLPDLLSFQMAMLEEGDPLFDLDIDYTAPPTRLFSEPTRFQTYPKFQPRRRIDFPSRFDGFYKKRRLERGLEEIQESFIMNHFPTKPLRTVYVYTHPEERRR.

In terms of assembly, component of a complex containing fem-1, fem-2 and fem-3. Interacts with fem-1 and fem-2 (via N-terminus). Part of a E3 ubiquitin-protein ligase complex, at least composed of cul-2, elc-1, tra-1, fem-1, fem-2 and fem-3; mediates the ubiquitination and subsequent proteasomal degradation of tra-1. Interacts with sel-10. Interacts with tra-2.

Required for male development. In XO (male) animals, fem-3 directs male differentiation in all tissues. In XX (hermaphrodite animals), it specifies the first 80 or so germ cells to be sperm. Negatively regulates male development when bound to tra-2. In Caenorhabditis briggsae, this protein is Sex-determination protein fem-3.